The chain runs to 82 residues: MDPIISAASVIAAGLAVGLAAIGPGIGQGSAAANAVEGLARQPEAEGKIRGTLLLSLAFMESLTIYGLVVALSLLFANPFIK.

A run of 2 helical transmembrane segments spans residues 3–23 (PIISAASVIAAGLAVGLAAIG) and 57–77 (LAFMESLTIYGLVVALSLLFA).

The protein belongs to the ATPase C chain family. As to quaternary structure, F-type ATPases have 2 components, F(1) - the catalytic core - and F(0) - the membrane proton channel. F(1) has five subunits: alpha(3), beta(3), gamma(1), delta(1), epsilon(1). F(0) has four main subunits: a(1), b(1), b'(1) and c(10-14). The alpha and beta chains form an alternating ring which encloses part of the gamma chain. F(1) is attached to F(0) by a central stalk formed by the gamma and epsilon chains, while a peripheral stalk is formed by the delta, b and b' chains.

The protein resides in the plastid. It localises to the chloroplast thylakoid membrane. Its function is as follows. F(1)F(0) ATP synthase produces ATP from ADP in the presence of a proton or sodium gradient. F-type ATPases consist of two structural domains, F(1) containing the extramembraneous catalytic core and F(0) containing the membrane proton channel, linked together by a central stalk and a peripheral stalk. During catalysis, ATP synthesis in the catalytic domain of F(1) is coupled via a rotary mechanism of the central stalk subunits to proton translocation. Functionally, key component of the F(0) channel; it plays a direct role in translocation across the membrane. A homomeric c-ring of between 10-14 subunits forms the central stalk rotor element with the F(1) delta and epsilon subunits. The polypeptide is ATP synthase subunit c, chloroplastic (Cyanidium caldarium (Red alga)).